A 71-amino-acid chain; its full sequence is Exodeoxyribonuclease 7 small subunit (71 aa).

The protein belongs to the XseB family. Heterooligomer composed of large and small subunits.

Its subcellular location is the cytoplasm. The catalysed reaction is Exonucleolytic cleavage in either 5'- to 3'- or 3'- to 5'-direction to yield nucleoside 5'-phosphates.. Functionally, bidirectionally degrades single-stranded DNA into large acid-insoluble oligonucleotides, which are then degraded further into small acid-soluble oligonucleotides. The chain is Exodeoxyribonuclease 7 small subunit from Streptococcus agalactiae serotype Ia (strain ATCC 27591 / A909 / CDC SS700).